The primary structure comprises 462 residues: Sugar transporter ERD6-like 12 (462 aa).

The next 12 membrane-spanning stretches (helical) occupy residues 25–45 (LLIF…AAIG), 62–82 (LAQF…GAIF), 101–121 (LFCI…WLDM), 124–144 (FLVG…IAEI), 151–171 (GAFT…VYYF), 179–199 (TLAI…FFIP), 262–282 (LTIG…GISS), 297–317 (IGMM…LILV), 326–346 (LMTS…AFGV), 358–378 (IFCF…MGAL), 399–419 (VTIA…FMLV), and 424–444 (GTFI…WCLV).

The protein belongs to the major facilitator superfamily. Sugar transporter (TC 2.A.1.1) family.

Its subcellular location is the membrane. Its function is as follows. Sugar transporter. This chain is Sugar transporter ERD6-like 12 (SUGTL5), found in Arabidopsis thaliana (Mouse-ear cress).